The chain runs to 270 residues: Formamidopyrimidine-DNA glycosylase (270 aa).

The Schiff-base intermediate with DNA role is filled by Pro2. The active-site Proton donor is Glu3. Lys58 acts as the Proton donor; for beta-elimination activity in catalysis. DNA contacts are provided by His91, Arg110, and Arg151. The segment at 236–270 (FVYGRGGMPCKLCGTTLREAKLGQRASVYCPRCQR) adopts an FPG-type zinc-finger fold. Catalysis depends on Arg260, which acts as the Proton donor; for delta-elimination activity.

The protein belongs to the FPG family. Monomer. Zn(2+) is required as a cofactor.

It catalyses the reaction Hydrolysis of DNA containing ring-opened 7-methylguanine residues, releasing 2,6-diamino-4-hydroxy-5-(N-methyl)formamidopyrimidine.. The catalysed reaction is 2'-deoxyribonucleotide-(2'-deoxyribose 5'-phosphate)-2'-deoxyribonucleotide-DNA = a 3'-end 2'-deoxyribonucleotide-(2,3-dehydro-2,3-deoxyribose 5'-phosphate)-DNA + a 5'-end 5'-phospho-2'-deoxyribonucleoside-DNA + H(+). In terms of biological role, involved in base excision repair of DNA damaged by oxidation or by mutagenic agents. Acts as a DNA glycosylase that recognizes and removes damaged bases. Has a preference for oxidized purines, such as 7,8-dihydro-8-oxoguanine (8-oxoG). Has AP (apurinic/apyrimidinic) lyase activity and introduces nicks in the DNA strand. Cleaves the DNA backbone by beta-delta elimination to generate a single-strand break at the site of the removed base with both 3'- and 5'-phosphates. This is Formamidopyrimidine-DNA glycosylase from Pseudomonas putida (strain W619).